The chain runs to 342 residues: L-threonine 3-dehydrogenase (342 aa).

C38 serves as a coordination point for Zn(2+). Residues T40 and H43 each act as charge relay system in the active site. 6 residues coordinate Zn(2+): H63, E64, C93, C96, C99, and C107. NAD(+) is bound by residues I175, D195, R200, 262-264, and 286-287; these read LGI and IY.

It belongs to the zinc-containing alcohol dehydrogenase family. As to quaternary structure, homotetramer. Zn(2+) serves as cofactor.

It is found in the cytoplasm. It carries out the reaction L-threonine + NAD(+) = (2S)-2-amino-3-oxobutanoate + NADH + H(+). The protein operates within amino-acid degradation; L-threonine degradation via oxydo-reductase pathway; glycine from L-threonine: step 1/2. Its function is as follows. Catalyzes the NAD(+)-dependent oxidation of L-threonine to 2-amino-3-ketobutyrate. This is L-threonine 3-dehydrogenase from Aeromonas salmonicida (strain A449).